We begin with the raw amino-acid sequence, 874 residues long: Trimodular acetylaranotin synthesis protein ataIMG (874 aa).

The interval 1–339 (MANLSGLSNR…DSGLLRASSI (339 aa)) is aminotransferase ataI. Residues 20-39 (RFGFQTTQQAKPTESSKTPI) form a disordered region. Residues 23 to 37 (FQTTQQAKPTESSKT) are compositionally biased toward polar residues. An O-methyltransferase ataM region spans residues 340–668 (SYNSMVKGSS…QERTEAEWRT (329 aa)). Asp625 contributes to the S-adenosyl-L-methionine binding site. Positions 669 to 874 (LAGRTGWEIR…VMEMGPQIGH (206 aa)) are glutathione S-transferase ataG. The region spanning 699–766 (KPLILAHELE…YLADRFDDGT (68 aa)) is the GST N-terminal domain. In terms of domain architecture, GST C-terminal spans 739-874 (DPETKAEVIV…VMEMGPQIGH (136 aa)).

The protein in the N-terminal section; belongs to the class-I pyridoxal-phosphate-dependent aminotransferase family. It in the 2nd section; belongs to the class I-like SAM-binding methyltransferase superfamily. Cation-independent O-methyltransferase family. In the C-terminal section; belongs to the GST superfamily. It depends on pyridoxal 5'-phosphate as a cofactor.

The catalysed reaction is RX + glutathione = an S-substituted glutathione + a halide anion + H(+). The protein operates within mycotoxin biosynthesis. In terms of biological role, trimodular acetylaranotin synthesis protein; part of the gene cluster that mediates the biosynthesis of acetylaranotin, a member of the epipolythiodioxopiperazine (ETP) class of toxins characterized by a disulfide-bridged cyclic dipeptide. The first step of acetylaranotin biosynthesis is performed by the NRPS ataP which produces diketopiperazine cyclo-L-Phe-L-Phe via the condensation of 2 phenylalanines (L-Phe). The ataC domain of ataTC then catalyzes the formation of bishydroxylation of cyclo-L-Phe-L-Phe. The glutathione S-transferase domain ataG in ataIMG further catalyzes the conjugation of two glutathiones to the bishydroxylated intermediate. Next, the dipeptidase ataJ removes the Glu residues. The following step is performed by the carbon sulfur lyase domain ataI of ataIMG which may convert the bis-cysteinyl adduct to yield an epidithiol intermediate. The ataT domain from ataTC then catalyzes the oxidation of the free dithiols, followed by a cyclization step catalyzed by the cytochrome P450 ataF. AtaF probably acts as an epoxidase to promote a dual epoxidation formation at C8 and C9 along with C8' and C9', followed by the spontaneous nucleophilic attack of the amide nitrogens N10 and N10' to yield an intermediate with the pyrrolidine partial structure. The final steps of acetylaranotin biosynthesis involve the acetylation and ring rearrangement of an epitetrathiodiketopiperazine intermediate to produce acetylaranotin. AtaH probably catalyzes the acetylation of epitetrathiodiketopiperazine to produce a diacetate and ataY is responsible for the formation of the dihydrooxepin moiety that converts the diacetate intermediate to acetylaranotin via acetylapoaranotin. Both enzymes could function independently in the absence of the other. The acetylaranotin bis-thiomethyltransferase ataS located outside of acetylaranotin gene cluster is the main thiomethyltransferase responsible for converting acetylaranotin and its related intermediates to their methylated forms. This Aspergillus terreus (strain NIH 2624 / FGSC A1156) protein is Trimodular acetylaranotin synthesis protein ataIMG.